Here is a 340-residue protein sequence, read N- to C-terminus: Uroporphyrinogen decarboxylase (340 aa).

Substrate contacts are provided by residues 21-25 (RQAGR), F40, D71, Y146, S201, and H316.

The protein belongs to the uroporphyrinogen decarboxylase family. In terms of assembly, homodimer.

The protein localises to the cytoplasm. It catalyses the reaction uroporphyrinogen III + 4 H(+) = coproporphyrinogen III + 4 CO2. The protein operates within porphyrin-containing compound metabolism; protoporphyrin-IX biosynthesis; coproporphyrinogen-III from 5-aminolevulinate: step 4/4. Functionally, catalyzes the decarboxylation of four acetate groups of uroporphyrinogen-III to yield coproporphyrinogen-III. The chain is Uroporphyrinogen decarboxylase from Rickettsia bellii (strain RML369-C).